Reading from the N-terminus, the 432-residue chain is D-amino acid dehydrogenase (432 aa).

3-17 (VVILGSGVVGVTSAW) serves as a coordination point for FAD.

The protein belongs to the DadA oxidoreductase family. FAD serves as cofactor.

The enzyme catalyses a D-alpha-amino acid + A + H2O = a 2-oxocarboxylate + AH2 + NH4(+). It functions in the pathway amino-acid degradation; D-alanine degradation; NH(3) and pyruvate from D-alanine: step 1/1. Oxidative deamination of D-amino acids. The sequence is that of D-amino acid dehydrogenase from Salmonella arizonae (strain ATCC BAA-731 / CDC346-86 / RSK2980).